Reading from the N-terminus, the 414-residue chain is Mu-like prophage FluMu F protein (414 aa).

It to phage Mu protein F.

Its function is as follows. Involved in virion morphogenesis. The chain is Mu-like prophage FluMu F protein from Haemophilus influenzae (strain ATCC 51907 / DSM 11121 / KW20 / Rd).